The primary structure comprises 197 residues: Imidazoleglycerol-phosphate dehydratase (197 aa).

This sequence belongs to the imidazoleglycerol-phosphate dehydratase family.

Its subcellular location is the cytoplasm. The catalysed reaction is D-erythro-1-(imidazol-4-yl)glycerol 3-phosphate = 3-(imidazol-4-yl)-2-oxopropyl phosphate + H2O. The protein operates within amino-acid biosynthesis; L-histidine biosynthesis; L-histidine from 5-phospho-alpha-D-ribose 1-diphosphate: step 6/9. In Rhodopseudomonas palustris (strain BisB5), this protein is Imidazoleglycerol-phosphate dehydratase.